A 71-amino-acid polypeptide reads, in one-letter code: Small ribosomal subunit protein bS21 (71 aa).

This sequence belongs to the bacterial ribosomal protein bS21 family.

This is Small ribosomal subunit protein bS21 from Shewanella sediminis (strain HAW-EB3).